Here is a 292-residue protein sequence, read N- to C-terminus: G1/S-specific cyclin-D3 (292 aa).

Residues 27–152 (VLQSLLRLEE…LVLGKLKWDL (126 aa)) form the Cyclin N-terminal domain. Residues 255–292 (LREAAQTSPSPAPKAPRGSSSQGPSQTSTPTDVTAIHL) are disordered. A phosphoserine mark is found at serine 264 and serine 279. A compositionally biased stretch (low complexity) spans 272 to 285 (GSSSQGPSQTSTPT). The residue at position 283 (threonine 283) is a Phosphothreonine.

It belongs to the cyclin family. Cyclin D subfamily. In terms of assembly, interacts with the CDK4 and CDK6 protein kinases to form a serine/threonine kinase holoenzyme complex. The cyclin subunit imparts substrate specificity to the complex. Interacts with ATF5. Interacts with EIF3K. Component of the ternary complex cyclin D/CDK4/CDKN1B required for nuclear translocation and modulation of CDK4-mediated kinase activity. Can form similar complexes with either CDKN1A or CDKN2A. In terms of processing, phosphorylation at Thr-283 by MAP kinases is required for ubiquitination and degradation by the DCX(AMBRA1) complex. Ubiquitinated by the DCX(AMBRA1) complex during the transition from G1 to S cell phase, leading to its degradation: ubiquitination is dependent on Thr-283 phosphorylation. The DCX(AMBRA1) complex represents the major regulator of CCND3 stability during the G1/S transition. Polyubiquitinated by the SCF(FBXL2) complex, leading to proteasomal degradation.

The protein localises to the nucleus. It is found in the cytoplasm. In terms of biological role, regulatory component of the cyclin D3-CDK4 (DC) complex that phosphorylates and inhibits members of the retinoblastoma (RB) protein family including RB1 and regulates the cell-cycle during G(1)/S transition. Phosphorylation of RB1 allows dissociation of the transcription factor E2F from the RB/E2F complex and the subsequent transcription of E2F target genes which are responsible for the progression through the G(1) phase. Hypophosphorylates RB1 in early G(1) phase. Cyclin D-CDK4 complexes are major integrators of various mitogenenic and antimitogenic signals. Component of the ternary complex, cyclin D3/CDK4/CDKN1B, required for nuclear translocation and activity of the cyclin D-CDK4 complex. Shows transcriptional coactivator activity with ATF5 independently of CDK4. The protein is G1/S-specific cyclin-D3 (CCND3) of Bos taurus (Bovine).